The following is a 352-amino-acid chain: Putative killer cell immunoglobulin-like receptor-like protein KIR3DX1 (352 aa).

The signal sequence occupies residues Met-1–Asn-16. 2 Ig-like C2-type domains span residues Gln-17 to Lys-112 and Pro-224 to Cys-311. 2 disulfide bridges follow: Cys-49–Cys-94 and Cys-244–Cys-295. An N-linked (GlcNAc...) asparagine glycan is attached at Asn-78.

In terms of tissue distribution, expressed in NK-cells.

The protein localises to the secreted. The sequence is that of Putative killer cell immunoglobulin-like receptor-like protein KIR3DX1 (KIR3DX1) from Homo sapiens (Human).